Reading from the N-terminus, the 382-residue chain is Chaperone protein DnaJ (382 aa).

One can recognise a J domain in the interval 5-69 (DLYGVLGVAK…QKRANYDQSG (65 aa)). The tract at residues 104–123 (QFFGGGGGQRNPNAPRPGRD) is disordered. The CR-type zinc-finger motif lies at 138–220 (GKKTKIKYNR…CGGSGHEEER (83 aa)). Cys151, Cys154, Cys168, Cys171, Cys194, Cys197, Cys208, and Cys211 together coordinate Zn(2+). CXXCXGXG motif repeat units lie at residues 151-158 (CHTCGGNG), 168-175 (CHQCGGSG), 194-201 (CPVCHGTG), and 208-215 (CPTCGGSG). Positions 358–382 (ASGESVTGSGKGNLFNKMRDKFNEN) are disordered.

It belongs to the DnaJ family. In terms of assembly, homodimer. It depends on Zn(2+) as a cofactor.

Its subcellular location is the cytoplasm. Functionally, participates actively in the response to hyperosmotic and heat shock by preventing the aggregation of stress-denatured proteins and by disaggregating proteins, also in an autonomous, DnaK-independent fashion. Unfolded proteins bind initially to DnaJ; upon interaction with the DnaJ-bound protein, DnaK hydrolyzes its bound ATP, resulting in the formation of a stable complex. GrpE releases ADP from DnaK; ATP binding to DnaK triggers the release of the substrate protein, thus completing the reaction cycle. Several rounds of ATP-dependent interactions between DnaJ, DnaK and GrpE are required for fully efficient folding. Also involved, together with DnaK and GrpE, in the DNA replication of plasmids through activation of initiation proteins. The protein is Chaperone protein DnaJ of Levilactobacillus brevis (strain ATCC 367 / BCRC 12310 / CIP 105137 / JCM 1170 / LMG 11437 / NCIMB 947 / NCTC 947) (Lactobacillus brevis).